A 615-amino-acid chain; its full sequence is Isocitrate dehydrogenase kinase/phosphatase (615 aa).

Residues 328–334 (APGIRGL) and Lys-349 each bind ATP. Residue Asp-384 is part of the active site. Residues 595–615 (AEPPATPPVKQPDAGPARRVA) are disordered.

The protein belongs to the AceK family.

The protein localises to the cytoplasm. It catalyses the reaction L-seryl-[isocitrate dehydrogenase] + ATP = O-phospho-L-seryl-[isocitrate dehydrogenase] + ADP + H(+). Its function is as follows. Bifunctional enzyme which can phosphorylate or dephosphorylate isocitrate dehydrogenase (IDH) on a specific serine residue. This is a regulatory mechanism which enables bacteria to bypass the Krebs cycle via the glyoxylate shunt in response to the source of carbon. When bacteria are grown on glucose, IDH is fully active and unphosphorylated, but when grown on acetate or ethanol, the activity of IDH declines drastically concomitant with its phosphorylation. The polypeptide is Isocitrate dehydrogenase kinase/phosphatase (Cupriavidus taiwanensis (strain DSM 17343 / BCRC 17206 / CCUG 44338 / CIP 107171 / LMG 19424 / R1) (Ralstonia taiwanensis (strain LMG 19424))).